We begin with the raw amino-acid sequence, 151 residues long: ATP synthase subunit b' (151 aa).

Residues 18 to 38 (TLPLMALQVVLLTFILNALFF) form a helical membrane-spanning segment.

It belongs to the ATPase B chain family. As to quaternary structure, F-type ATPases have 2 components, F(1) - the catalytic core - and F(0) - the membrane proton channel. F(1) has five subunits: alpha(3), beta(3), gamma(1), delta(1), epsilon(1). F(0) has four main subunits: a(1), b(1), b'(1) and c(10-14). The alpha and beta chains form an alternating ring which encloses part of the gamma chain. F(1) is attached to F(0) by a central stalk formed by the gamma and epsilon chains, while a peripheral stalk is formed by the delta, b and b' chains.

It is found in the cellular thylakoid membrane. In terms of biological role, f(1)F(0) ATP synthase produces ATP from ADP in the presence of a proton or sodium gradient. F-type ATPases consist of two structural domains, F(1) containing the extramembraneous catalytic core and F(0) containing the membrane proton channel, linked together by a central stalk and a peripheral stalk. During catalysis, ATP synthesis in the catalytic domain of F(1) is coupled via a rotary mechanism of the central stalk subunits to proton translocation. Component of the F(0) channel, it forms part of the peripheral stalk, linking F(1) to F(0). The b'-subunit is a diverged and duplicated form of b found in plants and photosynthetic bacteria. The protein is ATP synthase subunit b' of Prochlorococcus marinus (strain MIT 9313).